A 1026-amino-acid chain; its full sequence is Multidrug resistance protein MdtC (1026 aa).

The next 11 membrane-spanning stretches (helical) occupy residues 15-35 (ILIA…LPVA), 333-353 (EVEE…FLFL), 360-380 (LIPA…MYLC), 387-407 (LSLM…IVVL), 431-451 (VGFT…PLLL), 463-483 (FAVT…TLTP), 528-548 (LVGV…IAIP), 853-873 (LILI…LYES), 897-917 (LFNA…IGIV), 953-973 (PIMM…LSGG), and 984-1004 (ITIV…TPVV).

It belongs to the resistance-nodulation-cell division (RND) (TC 2.A.6) family. MdtC subfamily. Part of a tripartite efflux system composed of MdtA, MdtB and MdtC. MdtC forms a heteromultimer with MdtB.

It localises to the cell inner membrane. This is Multidrug resistance protein MdtC from Salmonella dublin (strain CT_02021853).